Consider the following 280-residue polypeptide: Large ribosomal subunit protein uL2 (280 aa).

The tract at residues 215-280 is disordered; the sequence is GRRPHVRGSA…IQRANDKKEK (66 aa).

Belongs to the universal ribosomal protein uL2 family. In terms of assembly, part of the 50S ribosomal subunit. Forms a bridge to the 30S subunit in the 70S ribosome.

Its function is as follows. One of the primary rRNA binding proteins. Required for association of the 30S and 50S subunits to form the 70S ribosome, for tRNA binding and peptide bond formation. It has been suggested to have peptidyltransferase activity; this is somewhat controversial. Makes several contacts with the 16S rRNA in the 70S ribosome. The polypeptide is Large ribosomal subunit protein uL2 (Dictyoglomus thermophilum (strain ATCC 35947 / DSM 3960 / H-6-12)).